Consider the following 423-residue polypeptide: Serine--tRNA ligase 2 (423 aa).

231–233 (TAE) provides a ligand contact to L-serine. 262–264 (RSE) is a binding site for ATP. An L-serine-binding site is contributed by Glu-285. Position 349–352 (349–352 (EISS)) interacts with ATP. Position 384 (Ser-384) interacts with L-serine.

This sequence belongs to the class-II aminoacyl-tRNA synthetase family. Type-1 seryl-tRNA synthetase subfamily. As to quaternary structure, homodimer. The tRNA molecule binds across the dimer.

The protein resides in the cytoplasm. The enzyme catalyses tRNA(Ser) + L-serine + ATP = L-seryl-tRNA(Ser) + AMP + diphosphate + H(+). It carries out the reaction tRNA(Sec) + L-serine + ATP = L-seryl-tRNA(Sec) + AMP + diphosphate + H(+). It functions in the pathway aminoacyl-tRNA biosynthesis; selenocysteinyl-tRNA(Sec) biosynthesis; L-seryl-tRNA(Sec) from L-serine and tRNA(Sec): step 1/1. Functionally, catalyzes the attachment of serine to tRNA(Ser). Is also able to aminoacylate tRNA(Sec) with serine, to form the misacylated tRNA L-seryl-tRNA(Sec), which will be further converted into selenocysteinyl-tRNA(Sec). This is Serine--tRNA ligase 2 from Enterococcus faecalis (strain ATCC 700802 / V583).